A 248-amino-acid chain; its full sequence is Anamorsin homolog (248 aa).

An N-terminal SAM-like domain region spans residues 4-129; the sequence is FKGLQKTLYI…ETGSSARLSF (126 aa). Residues 130 to 161 are linker; the sequence is AKKDASALNVWKISGDDEELIDEEDLLDEEDK. [2Fe-2S] cluster contacts are provided by Cys-172, Cys-181, Cys-184, and Cys-186. The tract at residues 172 to 186 is fe-S binding site A; sequence CSTTGKRKACKNCSC. [4Fe-4S] cluster-binding residues include Cys-209, Cys-212, Cys-220, and Cys-223. 2 short sequence motifs (cx2C motif) span residues 209-212 and 220-223; these read CGNC and CSTC. A fe-S binding site B region spans residues 209-223; it reads CGNCYLGDAFRCSTC.

The protein belongs to the anamorsin family. In terms of assembly, monomer. [2Fe-2S] cluster is required as a cofactor. The cofactor is [4Fe-4S] cluster.

It localises to the cytoplasm. The protein resides in the mitochondrion intermembrane space. In terms of biological role, component of the cytosolic iron-sulfur (Fe-S) protein assembly (CIA) machinery. Required for the maturation of extramitochondrial Fe-S proteins. Part of an electron transfer chain functioning in an early step of cytosolic Fe-S biogenesis, facilitating the de novo assembly of a [4Fe-4S] cluster on the cytosolic Fe-S scaffold complex. Electrons are transferred from NADPH via a FAD- and FMN-containing diflavin oxidoreductase. Together with the diflavin oxidoreductase, also required for the assembly of the diferric tyrosyl radical cofactor of ribonucleotide reductase (RNR), probably by providing electrons for reduction during radical cofactor maturation in the catalytic small subunit. This Drosophila ananassae (Fruit fly) protein is Anamorsin homolog.